Here is a 522-residue protein sequence, read N- to C-terminus: MVLSQLNGLTSPLDERHVHALQIALKGMTPTQLAWVSGYLAGIGGGPLRMPTEPKAVERITILFGSQTGNAKAVAEQLGARASEQGMDARVISMGDFNPRKLSKEQWVLIVVSTHGEGEPPENAYALHAFIQDQGAGRLEQLPFAVLGLGDSSYEHFCRTAVDFDRRLAELGAQRILPLQCCALDYRSDTERWSSDALNRLSALAPRKASNVVAMPTLRSHQDLRSHQEQSRNRARPYDKDNPYTATLLENRRITTLDAVSDVRHLALAIEPDAMHYRPGDALGVWVENDPSLADTILAGVGIDGAARIELGDEELDLRHALIERLELTQLHPTTVRGWSRASGRTGAEDAGERLEREEQTRIYLAGNDAFRLPDAGDTPLIMIGAGTGVAPYRAFLQQRAANGHPGRNWLIFGNRHFHRDFLYQLDWQAHRKAGRLDRVSLAFSRDGAEKPYVQQRLREEGKEILRWLDAGAHLYVCGATAMGQAVDHALVEIFTIEAGLDPDCASLRRYPARECYATDDL.

Positions Ile60–Leu198 constitute a Flavodoxin-like domain. Positions Thr217–Asn242 are disordered. Basic and acidic residues predominate over residues Ser220–Asn242. One can recognise an FAD-binding FR-type domain in the interval Asp241–Gln399.

As to quaternary structure, alpha(8)-beta(8). The alpha component is a flavoprotein, the beta component is a hemoprotein. FAD serves as cofactor. It depends on FMN as a cofactor.

It carries out the reaction hydrogen sulfide + 3 NADP(+) + 3 H2O = sulfite + 3 NADPH + 4 H(+). Functionally, catalyzes the 6-electron reduction of sulfite to sulfide. This is one of several activities required for the biosynthesis of L-cysteine from sulfate. The flavo-protein component catalyzes the electron flow from NADPH -&gt; FAD -&gt; FMN to the hemoprotein component. The chain is Sulfite reductase [NADPH] flavoprotein alpha-component (cysJ) from Thiocapsa roseopersicina.